The sequence spans 341 residues: Glucokinase (341 aa).

Position 18–23 (18–23 (GDIGGT)) interacts with ATP.

It belongs to the bacterial glucokinase family.

Its subcellular location is the cytoplasm. The catalysed reaction is D-glucose + ATP = D-glucose 6-phosphate + ADP + H(+). This Rhizobium etli (strain ATCC 51251 / DSM 11541 / JCM 21823 / NBRC 15573 / CFN 42) protein is Glucokinase.